Reading from the N-terminus, the 128-residue chain is Large ribosomal subunit protein bL19 (128 aa).

The protein belongs to the bacterial ribosomal protein bL19 family.

Functionally, this protein is located at the 30S-50S ribosomal subunit interface and may play a role in the structure and function of the aminoacyl-tRNA binding site. The protein is Large ribosomal subunit protein bL19 of Bradyrhizobium sp. (strain ORS 278).